The following is a 258-amino-acid chain: Large ribosomal subunit protein uL3 (258 aa).

The protein belongs to the universal ribosomal protein uL3 family. As to quaternary structure, part of the 50S ribosomal subunit. Forms a cluster with proteins L14 and L19.

One of the primary rRNA binding proteins, it binds directly near the 3'-end of the 23S rRNA, where it nucleates assembly of the 50S subunit. This Spiroplasma kunkelii protein is Large ribosomal subunit protein uL3.